The chain runs to 491 residues: (1S)-1-hydroxy-luvungin A synthase CYP88A37 (491 aa).

The helical transmembrane segment at Phe5–Val25 threads the bilayer. Cys439 contacts heme.

This sequence belongs to the cytochrome P450 family. It depends on heme as a cofactor. As to expression, expressed in maturing fruits and in juice vesicles.

The protein localises to the membrane. It carries out the reaction luvungin A + reduced [NADPH--hemoprotein reductase] + O2 = (1S)-1-hydroxy-luvungin A + oxidized [NADPH--hemoprotein reductase] + H2O + H(+). It participates in secondary metabolite biosynthesis; terpenoid biosynthesis. Its function is as follows. Monooxygenase involved in the biosynthesis of limonoids triterpene natural products such as limonin, a compound with insecticidal activity responsible for the bitter taste in citrus. Catalyzes the conversion of luvungin A to (1S)-1-hydroxy-luvungin A. The protein is (1S)-1-hydroxy-luvungin A synthase CYP88A37 of Citrus sinensis (Sweet orange).